The following is a 198-amino-acid chain: dCTP deaminase, dUMP-forming (198 aa).

DCTP is bound by residues 115–120, aspartate 133, 141–143, glutamine 162, tyrosine 175, and lysine 184; these read KSSIAR and TLE. Catalysis depends on glutamate 143, which acts as the Proton donor/acceptor.

The protein belongs to the dCTP deaminase family. As to quaternary structure, homotrimer.

The catalysed reaction is dCTP + 2 H2O = dUMP + NH4(+) + diphosphate. The protein operates within pyrimidine metabolism; dUMP biosynthesis; dUMP from dCTP: step 1/1. In terms of biological role, bifunctional enzyme that catalyzes both the deamination of dCTP to dUTP and the hydrolysis of dUTP to dUMP without releasing the toxic dUTP intermediate. The chain is dCTP deaminase, dUMP-forming from Nanoarchaeum equitans (strain Kin4-M).